Reading from the N-terminus, the 356-residue chain is Heat-inducible transcription repressor HrcA (356 aa).

The protein belongs to the HrcA family.

Its function is as follows. Negative regulator of class I heat shock genes (grpE-dnaK-dnaJ and groELS operons). Prevents heat-shock induction of these operons. This Bartonella tribocorum (strain CIP 105476 / IBS 506) protein is Heat-inducible transcription repressor HrcA.